Consider the following 245-residue polypeptide: 4-hydroxy-tetrahydrodipicolinate reductase (245 aa).

NAD(+) is bound by residues 7–12, 75–77, and 102–105; these read GAKGKV, GTT, and APNF. The Proton donor/acceptor role is filled by H132. Residue H133 coordinates (S)-2,3,4,5-tetrahydrodipicolinate. The active-site Proton donor is K136. (S)-2,3,4,5-tetrahydrodipicolinate is bound at residue 142–143; the sequence is GT.

Belongs to the DapB family.

It is found in the cytoplasm. The catalysed reaction is (S)-2,3,4,5-tetrahydrodipicolinate + NAD(+) + H2O = (2S,4S)-4-hydroxy-2,3,4,5-tetrahydrodipicolinate + NADH + H(+). It catalyses the reaction (S)-2,3,4,5-tetrahydrodipicolinate + NADP(+) + H2O = (2S,4S)-4-hydroxy-2,3,4,5-tetrahydrodipicolinate + NADPH + H(+). The protein operates within amino-acid biosynthesis; L-lysine biosynthesis via DAP pathway; (S)-tetrahydrodipicolinate from L-aspartate: step 4/4. Functionally, catalyzes the conversion of 4-hydroxy-tetrahydrodipicolinate (HTPA) to tetrahydrodipicolinate. The sequence is that of 4-hydroxy-tetrahydrodipicolinate reductase from Mycolicibacterium gilvum (strain PYR-GCK) (Mycobacterium gilvum (strain PYR-GCK)).